Reading from the N-terminus, the 179-residue chain is Large ribosomal subunit protein uL5 (179 aa).

It belongs to the universal ribosomal protein uL5 family. As to quaternary structure, part of the 50S ribosomal subunit; part of the 5S rRNA/L5/L18/L25 subcomplex. Contacts the 5S rRNA and the P site tRNA. Forms a bridge to the 30S subunit in the 70S ribosome.

Its function is as follows. This is one of the proteins that bind and probably mediate the attachment of the 5S RNA into the large ribosomal subunit, where it forms part of the central protuberance. In the 70S ribosome it contacts protein S13 of the 30S subunit (bridge B1b), connecting the 2 subunits; this bridge is implicated in subunit movement. Contacts the P site tRNA; the 5S rRNA and some of its associated proteins might help stabilize positioning of ribosome-bound tRNAs. This chain is Large ribosomal subunit protein uL5, found in Shewanella frigidimarina (strain NCIMB 400).